The chain runs to 149 residues: Large ribosomal subunit protein uL13 (149 aa).

It belongs to the universal ribosomal protein uL13 family. As to quaternary structure, part of the 50S ribosomal subunit.

Functionally, this protein is one of the early assembly proteins of the 50S ribosomal subunit, although it is not seen to bind rRNA by itself. It is important during the early stages of 50S assembly. This is Large ribosomal subunit protein uL13 from Borrelia turicatae (strain 91E135).